Reading from the N-terminus, the 577-residue chain is Aspartate--tRNA(Asp/Asn) ligase (577 aa).

Glu171 is an L-aspartate binding site. The segment at 195–198 (QLFK) is aspartate. Position 217 (Arg217) interacts with L-aspartate. ATP is bound by residues 217–219 (RDE) and Gln226. His444 is a binding site for L-aspartate. Glu474 lines the ATP pocket. Arg481 lines the L-aspartate pocket. 526–529 (GFDR) provides a ligand contact to ATP.

This sequence belongs to the class-II aminoacyl-tRNA synthetase family. Type 1 subfamily. As to quaternary structure, homodimer.

The protein resides in the cytoplasm. The enzyme catalyses tRNA(Asx) + L-aspartate + ATP = L-aspartyl-tRNA(Asx) + AMP + diphosphate. In terms of biological role, aspartyl-tRNA synthetase with relaxed tRNA specificity since it is able to aspartylate not only its cognate tRNA(Asp) but also tRNA(Asn). Is 1.7 times more efficient at aminoacylating tRNA(Asp) over tRNA(Asn). Reaction proceeds in two steps: L-aspartate is first activated by ATP to form Asp-AMP and then transferred to the acceptor end of tRNA(Asp/Asn). This is Aspartate--tRNA(Asp/Asn) ligase from Helicobacter pylori (strain ATCC 700392 / 26695) (Campylobacter pylori).